We begin with the raw amino-acid sequence, 299 residues long: MTKIKIVVIVGPTAVGKTALGISLAKAFNGEIISGDSQQVYRQLDIGTAKATQEEQEAAVHHLIDIREVTESYSAYDFVQDAQKSISDIVSRGKLPIIVGGTGLYLQSLLEGYHLGGQVDQEAVKAYRNELEQLDDHDLYERLQVNNITIEQVNRRRAIRALELAQFADELENAETAYEPLIIGLNDDRQVIYDRINQRVNRMIENGLLEEAKWLYEHYPTVQASRGIGYKELFPYFVGEMTLAEASDQLKQNTRRFAKRQLTWFRNRMAVSFTAITAPDYPQVVHDRVRDFLGQKEKS.

11 to 18 (GPTAVGKT) is an ATP binding site. 13–18 (TAVGKT) contributes to the substrate binding site. Residues 36–39 (DSQQ) are interaction with substrate tRNA.

Belongs to the IPP transferase family. In terms of assembly, monomer. Mg(2+) is required as a cofactor.

The catalysed reaction is adenosine(37) in tRNA + dimethylallyl diphosphate = N(6)-dimethylallyladenosine(37) in tRNA + diphosphate. In terms of biological role, catalyzes the transfer of a dimethylallyl group onto the adenine at position 37 in tRNAs that read codons beginning with uridine, leading to the formation of N6-(dimethylallyl)adenosine (i(6)A). This chain is tRNA dimethylallyltransferase, found in Streptococcus pyogenes serotype M1.